The following is a 134-amino-acid chain: Protein PsiB (134 aa).

Functionally, could be involved directly or indirectly in exopolysaccharide synthesis. The chain is Protein PsiB (psiB) from Rhizobium leguminosarum bv. phaseoli.